We begin with the raw amino-acid sequence, 296 residues long: MTTVNLAAYRFVSLDSIEQWRPLITARCNALGLRGTILLAPEGINLFIAGSRGATDAFVDYLRHDPLFEGKFADLPFKESLSDSQPFRRMLVRLKREIITMKKPAIKPELGRAPSVDARMLKAWLDRGHDDAGRPVVMLDTRNAFEVDVGTFDNALDYRIDKFSQFPGVIEANRADLEGKTVVSFCTGGIRCEKAAIHMKDVGIENVYQLEGGILKYFEEVGGAHYHGDCFVFDYRTALNPQLAPTADVTCFACRAVVPADAQQSPLYVPGKSCPACHPGDQGRRADHRADPAHAA.

Residues 132–226 (AGRPVVMLDT…YFEEVGGAHY (95 aa)) form the Rhodanese domain. Cysteine 186 serves as the catalytic Cysteine persulfide intermediate.

It belongs to the TrhO family.

It catalyses the reaction uridine(34) in tRNA + AH2 + O2 = 5-hydroxyuridine(34) in tRNA + A + H2O. Functionally, catalyzes oxygen-dependent 5-hydroxyuridine (ho5U) modification at position 34 in tRNAs. In Burkholderia thailandensis (strain ATCC 700388 / DSM 13276 / CCUG 48851 / CIP 106301 / E264), this protein is tRNA uridine(34) hydroxylase.